We begin with the raw amino-acid sequence, 428 residues long: Sorting nexin-31 (428 aa).

One can recognise a PX domain in the interval 1 to 107 (MHICIPVTEE…EYFKKLQMDT (107 aa)).

It belongs to the sorting nexin family.

In terms of biological role, may be involved in protein trafficking. The protein is Sorting nexin-31 (snx31) of Xenopus tropicalis (Western clawed frog).